The chain runs to 564 residues: Esterase FE4 (564 aa).

An N-terminal signal peptide occupies residues 1 to 23; the sequence is MKNTCGILLNLFLFIGCFLTCSA. A glycan (N-linked (GlcNAc...) asparagine) is linked at Asn81. Residues Cys89 and Cys106 are joined by a disulfide bond. The Acyl-ester intermediate role is filled by Ser214. Cys266 and Cys277 are joined by a disulfide. An N-linked (GlcNAc...) asparagine glycan is attached at Asn269. Glu339 functions as the Charge relay system in the catalytic mechanism. Asn371, Asn404, and Asn443 each carry an N-linked (GlcNAc...) asparagine glycan. His463 acts as the Charge relay system in catalysis.

This sequence belongs to the type-B carboxylesterase/lipase family.

The enzyme catalyses a carboxylic ester + H2O = an alcohol + a carboxylate + H(+). Its function is as follows. Overproduction of nonspecific esterases is a common mechanism of resistance to organophosphate insecticides. This chain is Esterase FE4, found in Myzus persicae (Green peach aphid).